Consider the following 381-residue polypeptide: Putative 8-amino-7-oxononanoate synthase (381 aa).

Arg-22 is a binding site for substrate. 109–110 (GF) provides a ligand contact to pyridoxal 5'-phosphate. His-134 lines the substrate pocket. Pyridoxal 5'-phosphate contacts are provided by residues Ser-182, 207–210 (DDAH), and 233–236 (TLSK). An N6-(pyridoxal phosphate)lysine modification is found at Lys-236. Thr-345 contacts substrate.

Belongs to the class-II pyridoxal-phosphate-dependent aminotransferase family. BioF subfamily. In terms of assembly, homodimer. Pyridoxal 5'-phosphate is required as a cofactor.

It catalyses the reaction 6-carboxyhexanoyl-[ACP] + L-alanine + H(+) = (8S)-8-amino-7-oxononanoate + holo-[ACP] + CO2. The protein operates within cofactor biosynthesis; biotin biosynthesis. Its function is as follows. Catalyzes the decarboxylative condensation of pimeloyl-[acyl-carrier protein] and L-alanine to produce 8-amino-7-oxononanoate (AON), [acyl-carrier protein], and carbon dioxide. The protein is Putative 8-amino-7-oxononanoate synthase (bioF) of Acidiphilium cryptum (strain JF-5).